The following is a 290-amino-acid chain: Probable endonuclease 4 (290 aa).

9 residues coordinate Zn(2+): His66, His106, Glu143, Asp179, His182, His216, Asp229, His231, and Glu261.

Belongs to the AP endonuclease 2 family. Zn(2+) is required as a cofactor.

The catalysed reaction is Endonucleolytic cleavage to 5'-phosphooligonucleotide end-products.. Functionally, endonuclease IV plays a role in DNA repair. It cleaves phosphodiester bonds at apurinic or apyrimidinic (AP) sites, generating a 3'-hydroxyl group and a 5'-terminal sugar phosphate. In Solibacter usitatus (strain Ellin6076), this protein is Probable endonuclease 4.